Consider the following 92-residue polypeptide: Small ribosomal subunit protein uS19 (92 aa).

It belongs to the universal ribosomal protein uS19 family.

Its function is as follows. Protein S19 forms a complex with S13 that binds strongly to the 16S ribosomal RNA. The protein is Small ribosomal subunit protein uS19 of Polaromonas naphthalenivorans (strain CJ2).